The following is a 1605-amino-acid chain: Ribosome-binding protein 1 (1605 aa).

Topologically, residues 1–7 (MDIYDTQ) are lumenal. Residues 8-28 (TLGVVVFGGFMVVSAIGIFLV) form a helical membrane-spanning segment. Residues 29–1605 (STFSMKETSY…GSSSKEGTSV (1577 aa)) are Cytoplasmic-facing. A disordered region spans residues 44-88 (NQRKEMAKTHHQKGEKKKKEKTVEKKGKTKKKEEKPNGKIPEHDL). Over residues 52-63 (THHQKGEKKKKE) the composition is skewed to basic residues. Positions 64–88 (KTVEKKGKTKKKEEKPNGKIPEHDL) are enriched in basic and acidic residues. Position 111 is a phosphoserine (S111). The interval 114–150 (SSVGHTPIATVPAMPQEKLASSPKDRKKKEKKVAKVE) is disordered. A Glycyl lysine isopeptide (Lys-Gly) (interchain with G-Cter in SUMO2) cross-link involves residue K148. A phosphoserine mark is found at S159 and S165. The tract at residues 172–849 (ATPKEVPMVA…PGPPDCDGPL (678 aa)) is disordered. 61 repeat units span residues 196–205 (SQGKKGQGAQ), 206–215 (NQAKKGEGAQ), 216–225 (NQGKKGEGAQ), 226–235 (NQAKKGEGAQ), 236–245 (NQAKKGEGAQ), 246–255 (NQGKKGEGAQ), 256–265 (NQAKKGEGGQ), 266–275 (NQAKKGEGAQ), 276–285 (NQGKKGEGAQ), 286–295 (NQGKKGEGAQ), 296–305 (NQAKKGEGAQ), 306–315 (NQAKKGEGAQ), 316–325 (NQGKKGEGAQ), 326–335 (NQSKKGEGAQ), 336–345 (NQAKKGEGGQ), 346–355 (NQAKKGEGAQ), 356–365 (NQAKKGEGAQ), 366–375 (NQAKKGEGVQ), 376–385 (NQAKKGVEGA), 386–395 (QNQGKKGEAN), 396–405 (QNQAKKGEGG), 406–415 (QNQTKKGEGP), 416–425 (QNQGKKGEAA), 426–435 (QKQDKKIEGA), 436–445 (QNQGKKPEGT), 446–455 (SNQGKKGEGA), 456–465 (QNQGKKGEGA), 466–475 (QNQSKKGEGA), 476–485 (QNQAKKGEGG), 486–495 (QNQAKKGEGA), 496–505 (QNQAKKGEGA), 506–515 (QNQAKKGEGV), 516–525 (QNQAKKGVEG), 527–536 (QNQGKKGEAN), 537–546 (QNQAKKGEGG), 547–556 (QNQTKKGEGP), 557–566 (QNQGKKGEAA), 567–576 (QKQDKKIEGA), 577–586 (QNQGKKPEGT), 587–596 (SNQGKKGEGA), 597–606 (QNQGKKGEGA), 607–616 (QNQGKKGEGA), 617–626 (QNQGKKGEGA), 628–637 (NQGKKGEGAQ), 638–647 (NQGKKGEGAQ), 648–657 (NQGKKGEGAQ), 658–667 (NQGKKGEGPQ), 668–677 (NQAKKGEGAQ), 678–687 (NQGKKGEGAQ), 688–697 (NQGKKGEGAQ), 698–707 (NQGKKAEGVQ), 708–717 (SQSKKGEGTQ), 718–727 (NQGKKGDGNP), 729–738 (QGKKGEGASN), 739–748 (QNRKTDTVAN), 749–758 (QGTKQEGVSN), 759–768 (QVKKSEGSPN), 769–778 (QGKKAEGAPN), 779–788 (QGKKKDGSPS), 789–798 (QAKKVDAAAN), and 799–808 (QGKKSEMAPA). The 61 X 10 AA tandem repeats of [NSQ]-[NKQVGA]-[GSAQKRT]-[ASGDTK]-[KGTQSAV]-[KGAED]-[EQVGIPTDMA]-[EGVAS]-[AGVPETNS]-[AQNGPTVS] stretch occupies residues 196-808 (SQGKKGQGAQ…QGKKSEMAPA (613 aa)). Over residues 197-208 (QGKKGQGAQNQA) the composition is skewed to low complexity. 4 stretches are compositionally biased toward polar residues: residues 224 to 258 (AQNQAKKGEGAQNQAKKGEGAQNQGKKGEGAQNQA), 274 to 338 (AQNQ…QNQA), 354 to 378 (AQNQAKKGEGAQNQAKKGEGVQNQA), and 385 to 399 (AQNQGKKGEANQNQA). Positions 420-433 (KKGEAAQKQDKKIE) are enriched in basic and acidic residues. Composition is skewed to polar residues over residues 435–479 (AQNQ…QNQA), 495–519 (AQNQAKKGEGAQNQAKKGEGVQNQA), and 526–540 (AQNQGKKGEANQNQA). A compositionally biased stretch (basic and acidic residues) spans 561–574 (KKGEAAQKQDKKIE). 2 stretches are compositionally biased toward polar residues: residues 576–720 (AQNQ…QNQG) and 736–769 (ASNQNRKTDTVANQGTKQEGVSNQVKKSEGSPNQ). Position 786 is a phosphoserine (S786). Over residues 811–821 (QKASMVQSQEA) the composition is skewed to polar residues. Position 818 is a phosphoserine (S818). K823 participates in a covalent cross-link: Glycyl lysine isopeptide (Lys-Gly) (interchain with G-Cter in SUMO1). K1135 bears the N6-acetyllysine mark. 2 positions are modified to phosphoserine: S1162 and S1178. 2 disordered regions span residues 1460–1481 (MRSHVEDGDVAGSPAVPPAEQD) and 1571–1605 (TTQEQLTKEKDTVKKLQEQLGKAEDGSSSKEGTSV). The span at 1576–1598 (LTKEKDTVKKLQEQLGKAEDGSS) shows a compositional bias: basic and acidic residues.

As to expression, widely expressed.

Its subcellular location is the endoplasmic reticulum membrane. Acts as a ribosome receptor and mediates interaction between the ribosome and the endoplasmic reticulum membrane. The polypeptide is Ribosome-binding protein 1 (Rrbp1) (Mus musculus (Mouse)).